Reading from the N-terminus, the 317-residue chain is Melanocyte-stimulating hormone receptor (317 aa).

Residues 1 to 37 (MPVQGSQRRLLGSLNSTPTATPHLGLAANQTGARCLE) lie on the Extracellular side of the membrane. Asn-29 is a glycosylation site (N-linked (GlcNAc...) asparagine). The helical transmembrane segment at 38–63 (VSVPDGLFLSLGLVSLVENVLVVTAI) threads the bilayer. Residues 64–72 (AKNRNLHSP) are Cytoplasmic-facing. Residues 73–93 (MYCFICCLALSDLLVSGSNML) traverse the membrane as a helical segment. The Extracellular segment spans residues 94-118 (ETAVTLLLEAGALAARAAVVQQLDN). A helical membrane pass occupies residues 119 to 140 (VIDVITCSSMLSSLCFLGAIAV). Over 141–163 (DRYISIFYALRYHSIVTLPRARR) the chain is Cytoplasmic. A helical transmembrane segment spans residues 164–183 (AVAAIWVASVLCSTLFIAYY). Over 184–191 (DHAAVLLC) the chain is Extracellular. A helical membrane pass occupies residues 192 to 211 (LVVFFLAMLVLMAVLYVHML). Residues 212–240 (ARACQHAQGIARLHKRQRLAHQGFGLKGA) lie on the Cytoplasmic side of the membrane. The helical transmembrane segment at 241–266 (ATLTILLGIFFLCWGPFFLHLTLIVL) threads the bilayer. Topologically, residues 267-279 (CPQHPTCSCIFKN) are extracellular. Residues 280 to 300 (FNLFLALIICNAIIDPLIYAF) form a helical membrane-spanning segment. Residues 301–317 (RSQELRRTLKEVLLCSW) are Cytoplasmic-facing. Cys-315 is lipidated: S-palmitoyl cysteine.

The protein belongs to the G-protein coupled receptor 1 family. In terms of assembly, interacts with MGRN1, but does not undergo MGRN1-mediated ubiquitination; this interaction competes with GNAS-binding and thus inhibits agonist-induced cAMP production. Interacts with OPN3; the interaction results in a decrease in MC1R-mediated cAMP signaling and ultimately a decrease in melanin production in melanocytes.

The protein localises to the cell membrane. Receptor for MSH (alpha, beta and gamma) and ACTH. The activity of this receptor is mediated by G proteins which activate adenylate cyclase. Mediates melanogenesis, the production of eumelanin (black/brown) and phaeomelanin (red/yellow), via regulation of cAMP signaling in melanocytes. This is Melanocyte-stimulating hormone receptor (MC1R) from Macaca sylvanus (Barbary macaque).